Consider the following 98-residue polypeptide: Integration host factor subunit alpha (98 aa).

It belongs to the bacterial histone-like protein family. In terms of assembly, heterodimer of an alpha and a beta chain.

Its function is as follows. This protein is one of the two subunits of integration host factor, a specific DNA-binding protein that functions in genetic recombination as well as in transcriptional and translational control. In Mannheimia succiniciproducens (strain KCTC 0769BP / MBEL55E), this protein is Integration host factor subunit alpha.